A 247-amino-acid polypeptide reads, in one-letter code: tRNA uridine(34) hydroxylase (247 aa).

The Rhodanese domain maps to 124–218 (TKQNVIVIDT…YLEDTHNKNN (95 aa)). Catalysis depends on Cys-178, which acts as the Cysteine persulfide intermediate.

Belongs to the TrhO family.

The catalysed reaction is uridine(34) in tRNA + AH2 + O2 = 5-hydroxyuridine(34) in tRNA + A + H2O. Catalyzes oxygen-dependent 5-hydroxyuridine (ho5U) modification at position 34 in tRNAs. The protein is tRNA uridine(34) hydroxylase of Rickettsia typhi (strain ATCC VR-144 / Wilmington).